The following is a 296-amino-acid chain: Nucleotide-binding protein SZO_12220 (296 aa).

13-20 contacts ATP; that stretch reads GMSGAGKT. A GTP-binding site is contributed by 63 to 66; the sequence is DMRS.

The protein belongs to the RapZ-like family.

In terms of biological role, displays ATPase and GTPase activities. In Streptococcus equi subsp. zooepidemicus (strain H70), this protein is Nucleotide-binding protein SZO_12220.